We begin with the raw amino-acid sequence, 271 residues long: Tryptophan synthase alpha chain (271 aa).

Active-site proton acceptor residues include Glu-51 and Asp-62.

The protein belongs to the TrpA family. Tetramer of two alpha and two beta chains.

The enzyme catalyses (1S,2R)-1-C-(indol-3-yl)glycerol 3-phosphate + L-serine = D-glyceraldehyde 3-phosphate + L-tryptophan + H2O. It participates in amino-acid biosynthesis; L-tryptophan biosynthesis; L-tryptophan from chorismate: step 5/5. The alpha subunit is responsible for the aldol cleavage of indoleglycerol phosphate to indole and glyceraldehyde 3-phosphate. This chain is Tryptophan synthase alpha chain, found in Prochlorococcus marinus (strain NATL2A).